Consider the following 392-residue polypeptide: Chalcone synthase 1 (392 aa).

The active site involves cysteine 167.

The protein belongs to the thiolase-like superfamily. Chalcone/stilbene synthases family.

The catalysed reaction is (E)-4-coumaroyl-CoA + 3 malonyl-CoA + 3 H(+) = 2',4,4',6'-tetrahydroxychalcone + 3 CO2 + 4 CoA. The protein operates within secondary metabolite biosynthesis; flavonoid biosynthesis. Functionally, the primary product of this enzyme is 4,2',4',6'-tetrahydroxychalcone (also termed naringenin-chalcone or chalcone) which can under specific conditions spontaneously isomerize into naringenin. In Secale cereale (Rye), this protein is Chalcone synthase 1 (CHS1).